Reading from the N-terminus, the 413-residue chain is Peptidase T (413 aa).

His-81 lines the Zn(2+) pocket. The active site involves Asp-83. Asp-143 contributes to the Zn(2+) binding site. Glu-178 functions as the Proton acceptor in the catalytic mechanism. Zn(2+) is bound by residues Glu-179, Asp-201, and His-383.

The protein belongs to the peptidase M20B family. In terms of assembly, homodimer. Requires Zn(2+) as cofactor.

The protein localises to the cytoplasm. The enzyme catalyses Release of the N-terminal residue from a tripeptide.. Its activity is regulated as follows. Inhibited by EDTA, by the reducing agents dithiothreitol and 13-mercaptoethanol, and by the divalent cation Cu(2+). In terms of biological role, cleaves the N-terminal amino acid of tripeptides. Has a broad specificity for tripeptides with no clear preference for a particular tripeptide. Tripeptides with proline in the second position are an exception and are not hydrolyzed. Does not hydrolyze dipeptides, tetrapeptides, or oligopeptides. The chain is Peptidase T (pepT) from Lactococcus lactis subsp. cremoris (Streptococcus cremoris).